We begin with the raw amino-acid sequence, 281 residues long: ATP synthase subunit a (281 aa).

The next 7 membrane-spanning stretches (helical) occupy residues 56 to 76, 117 to 137, 144 to 164, 181 to 201, 215 to 235, 237 to 257, and 259 to 279; these read KPML…WAAF, LVVS…IPVA, IIAY…TLTF, KSLG…NILI, FAGH…LNGV, IAYA…ELFI, and ALQA…AMAE.

Belongs to the ATPase A chain family. In terms of assembly, F-type ATPases have 2 components, CF(1) - the catalytic core - and CF(0) - the membrane proton channel. CF(1) has five subunits: alpha(3), beta(3), gamma(1), delta(1), epsilon(1). CF(0) has three main subunits: a(1), b(2) and c(9-12). The alpha and beta chains form an alternating ring which encloses part of the gamma chain. CF(1) is attached to CF(0) by a central stalk formed by the gamma and epsilon chains, while a peripheral stalk is formed by the delta and b chains.

The protein localises to the cell membrane. Functionally, key component of the proton channel; it plays a direct role in the translocation of protons across the membrane. The polypeptide is ATP synthase subunit a (Streptomyces lividans).